The primary structure comprises 213 residues: Uridine kinase (213 aa).

An ATP-binding site is contributed by 14-21; sequence GASASGKS.

This sequence belongs to the uridine kinase family.

The protein localises to the cytoplasm. The enzyme catalyses uridine + ATP = UMP + ADP + H(+). The catalysed reaction is cytidine + ATP = CMP + ADP + H(+). It participates in pyrimidine metabolism; CTP biosynthesis via salvage pathway; CTP from cytidine: step 1/3. The protein operates within pyrimidine metabolism; UMP biosynthesis via salvage pathway; UMP from uridine: step 1/1. The sequence is that of Uridine kinase from Vibrio cholerae serotype O1 (strain ATCC 39315 / El Tor Inaba N16961).